The primary structure comprises 198 residues: Small ribosomal subunit protein uS11 (198 aa).

2 stretches are compositionally biased toward low complexity: residues 1–11 (MSGTEAGAGEP) and 19–58 (EAAQ…TAQP). Disordered regions lie at residues 1–72 (MSGT…TPAD) and 178–198 (DVTP…GRRV). Positions 187-198 (TRKKGGKRGRRV) are enriched in basic residues.

It belongs to the universal ribosomal protein uS11 family. Part of the 30S ribosomal subunit.

Its function is as follows. Located on the platform of the 30S subunit. This is Small ribosomal subunit protein uS11 from Cenarchaeum symbiosum (strain A).